The sequence spans 78 residues: MNLCLSSLLFFLVILLPSGKGMFGNDGVKVRTCTSQKAVCFFGCPPGYRWIAFCHNILSCCKNMTRFQPLQAKDPWVH.

An N-terminal signal peptide occupies residues 1–21 (MNLCLSSLLFFLVILLPSGKG). 3 cysteine pairs are disulfide-bonded: Cys33-Cys60, Cys40-Cys54, and Cys44-Cys61.

This sequence belongs to the beta-defensin family.

The protein localises to the secreted. Host defense peptide that exhibits antimicrobial and antifungal activity. Exhibits antimicrobial activity against E.coli, S.aureus and C.albicans (in vitro). Has high lipopolysaccharide (LPS)-binding affinity, and may thereby be involved in immunoregulation through LPS neutralization. This Pan troglodytes (Chimpanzee) protein is Defensin beta 136 (DEFB136).